A 140-amino-acid polypeptide reads, in one-letter code: uncharacterized protein (140 aa).

Transmembrane regions (helical) follow at residues 26-43 and 64-86; these read YLDL…TGVI and LLNF…NGVL.

Belongs to the bacteriophage holin family. Cp-1 holin subfamily.

The protein resides in the cell membrane. This is an uncharacterized protein from Bacillus subtilis (strain 168).